Reading from the N-terminus, the 816-residue chain is uncharacterized protein (816 aa).

NADP(+) is bound at residue 503 to 534; the sequence is DTWTVITGGTDGIGKAYIEELCKTRGLKKFYL. Residue S641 participates in substrate binding. The active-site Proton acceptor is Y661. 2 helical membrane passes run 743–763 and 777–797; these read FGFS…SIVL and VFII…FLLN.

It belongs to the short-chain dehydrogenases/reductases (SDR) family.

It is found in the membrane. This is an uncharacterized protein from Caenorhabditis elegans.